A 265-amino-acid polypeptide reads, in one-letter code: Thiazole synthase (265 aa).

The active-site Schiff-base intermediate with DXP is K103. Residues G164, 190–191 (AG), and 212–213 (NT) each bind 1-deoxy-D-xylulose 5-phosphate.

Belongs to the ThiG family. In terms of assembly, homotetramer. Forms heterodimers with either ThiH or ThiS.

It is found in the cytoplasm. The catalysed reaction is [ThiS sulfur-carrier protein]-C-terminal-Gly-aminoethanethioate + 2-iminoacetate + 1-deoxy-D-xylulose 5-phosphate = [ThiS sulfur-carrier protein]-C-terminal Gly-Gly + 2-[(2R,5Z)-2-carboxy-4-methylthiazol-5(2H)-ylidene]ethyl phosphate + 2 H2O + H(+). It participates in cofactor biosynthesis; thiamine diphosphate biosynthesis. Its function is as follows. Catalyzes the rearrangement of 1-deoxy-D-xylulose 5-phosphate (DXP) to produce the thiazole phosphate moiety of thiamine. Sulfur is provided by the thiocarboxylate moiety of the carrier protein ThiS. In vitro, sulfur can be provided by H(2)S. The polypeptide is Thiazole synthase (Bordetella avium (strain 197N)).